A 143-amino-acid polypeptide reads, in one-letter code: Phosphoribosyl-AMP cyclohydrolase (143 aa).

Aspartate 86 provides a ligand contact to Mg(2+). Cysteine 87 contacts Zn(2+). Mg(2+)-binding residues include aspartate 88 and aspartate 90. 2 residues coordinate Zn(2+): cysteine 103 and cysteine 110.

The protein belongs to the PRA-CH family. Homodimer. The cofactor is Mg(2+). Zn(2+) serves as cofactor.

It is found in the cytoplasm. It catalyses the reaction 1-(5-phospho-beta-D-ribosyl)-5'-AMP + H2O = 1-(5-phospho-beta-D-ribosyl)-5-[(5-phospho-beta-D-ribosylamino)methylideneamino]imidazole-4-carboxamide. It participates in amino-acid biosynthesis; L-histidine biosynthesis; L-histidine from 5-phospho-alpha-D-ribose 1-diphosphate: step 3/9. Catalyzes the hydrolysis of the adenine ring of phosphoribosyl-AMP. The sequence is that of Phosphoribosyl-AMP cyclohydrolase from Rhodospirillum rubrum (strain ATCC 11170 / ATH 1.1.1 / DSM 467 / LMG 4362 / NCIMB 8255 / S1).